Here is a 216-residue protein sequence, read N- to C-terminus: Sperm microtubule inner protein 8 (216 aa).

As to quaternary structure, microtubule inner protein component of sperm flagellar doublet microtubules.

The protein resides in the cytoplasm. The protein localises to the cytoskeleton. It is found in the flagellum axoneme. In terms of biological role, microtubule inner protein (MIP) part of the dynein-decorated doublet microtubules (DMTs) in flagellum axoneme. May serve to reinforce and thus stabilize the microtubule structure in the sperm flagella. This chain is Sperm microtubule inner protein 8 (Spmip8), found in Rattus norvegicus (Rat).